Reading from the N-terminus, the 541-residue chain is Putative apolipoprotein N-acyltransferase (541 aa).

6 consecutive transmembrane segments (helical) span residues 31 to 51 (PLPA…AAHA), 65 to 85 (GWLF…VSMH), 89 to 109 (GLAA…LALF), 144 to 164 (AACW…FPWL), 181 to 201 (LLGV…LAGL), and 215 to 235 (LAAG…QFSW). Positions 248–511 (VQGNVEQSQK…AGVLPVAVQG (264 aa)) constitute a CN hydrolase domain. E292 acts as the Proton acceptor in catalysis. K366 is an active-site residue. C416 acts as the Nucleophile in catalysis.

The protein belongs to the CN hydrolase family. Apolipoprotein N-acyltransferase subfamily.

The protein resides in the cell inner membrane. It catalyses the reaction N-terminal S-1,2-diacyl-sn-glyceryl-L-cysteinyl-[lipoprotein] + a glycerophospholipid = N-acyl-S-1,2-diacyl-sn-glyceryl-L-cysteinyl-[lipoprotein] + a 2-acyl-sn-glycero-3-phospholipid + H(+). It functions in the pathway protein modification; lipoprotein biosynthesis (N-acyl transfer). In terms of biological role, catalyzes the phospholipid dependent N-acylation of the N-terminal cysteine of apolipoprotein, the last step in lipoprotein maturation. This Bordetella parapertussis (strain 12822 / ATCC BAA-587 / NCTC 13253) protein is Putative apolipoprotein N-acyltransferase.